We begin with the raw amino-acid sequence, 142 residues long: MTTAIQYQVIPLADREHSNKVASILENKYKTATNKRITLNERFGVLEKGYTIQATEPETVKNDSDVFFVVHDRNLNSKKEFVENYLAKNPIVNSPEKVFEEEDKENAPTKKAVLKPSSTDEKKLTSSDIYIQEITRSILQSV.

The segment at 97 to 123 (KVFEEEDKENAPTKKAVLKPSSTDEKK) is disordered.

In terms of assembly, component of the tost-1 variant of the PETISCO complex (also called the pid-3, erh-2, tofu-6, and ife-3 small RNA complex) containing at least tost-1, tofu-6, ife-3, pid-3, and erh-2, which plays an essential role in embryogenesis. Within the complex interacts with erh-2. Within the complex interacts with pid-3 and tofu-6. In contrast to the pid-1 variant of the PETISCO complex, the tost-1 variant of the PETISCO complex plays a minor role in the biogenesis of a class of 21 nucleotide PIWI-interacting RNAs (piRNAs) that possess a uracil residue at the 5'-end (also called 21U-RNAs). As to expression, expressed in the germline.

The protein resides in the cytoplasm. The protein localises to the nucleus. Functionally, component of the tost-1 variant of the PETISCO complex which plays an essential role in embryogenesis. Within the complex acts as an adapter which binds to the complex via erh-2. Does not seem to play a role in the biogenesis of a class of 21 nucleotide PIWI-interacting RNAs (piRNAs) that possess a uracil residue at the 5'-end (also called 21U-RNAs). May inhibit 21U-RNA accumulation. Required for chromosome segregation and cell division in early embryos. This is Protein tost-1 from Caenorhabditis elegans.